A 434-amino-acid chain; its full sequence is Trigger factor (434 aa).

The 86-residue stretch at 160–245 (GDKVKMNFVG…LTEVQAAQLP (86 aa)) folds into the PPIase FKBP-type domain.

Belongs to the FKBP-type PPIase family. Tig subfamily.

It is found in the cytoplasm. It carries out the reaction [protein]-peptidylproline (omega=180) = [protein]-peptidylproline (omega=0). In terms of biological role, involved in protein export. Acts as a chaperone by maintaining the newly synthesized protein in an open conformation. Functions as a peptidyl-prolyl cis-trans isomerase. The protein is Trigger factor of Shewanella denitrificans (strain OS217 / ATCC BAA-1090 / DSM 15013).